A 349-amino-acid chain; its full sequence is Heme A synthase (349 aa).

A run of 5 helical transmembrane segments spans residues 15 to 35 (AVQV…VVGG), 101 to 121 (LLGR…ALTG), 132 to 152 (FGLF…VASG), 162 to 182 (YRLA…VAVA), and 203 to 223 (VLVG…GLDA). Residue His265 coordinates heme. Transmembrane regions (helical) follow at residues 268-288 (IAYL…RLGG), 296-316 (LVFA…VHMV), and 317-337 (PLDL…AAMI). A heme-binding site is contributed by His324.

The protein belongs to the COX15/CtaA family. Type 2 subfamily. In terms of assembly, interacts with CtaB. Requires heme b as cofactor.

The protein resides in the cell membrane. It catalyses the reaction Fe(II)-heme o + 2 A + H2O = Fe(II)-heme a + 2 AH2. It participates in porphyrin-containing compound metabolism; heme A biosynthesis; heme A from heme O: step 1/1. Functionally, catalyzes the conversion of heme O to heme A by two successive hydroxylations of the methyl group at C8. The first hydroxylation forms heme I, the second hydroxylation results in an unstable dihydroxymethyl group, which spontaneously dehydrates, resulting in the formyl group of heme A. In Azorhizobium caulinodans (strain ATCC 43989 / DSM 5975 / JCM 20966 / LMG 6465 / NBRC 14845 / NCIMB 13405 / ORS 571), this protein is Heme A synthase.